The following is a 162-amino-acid chain: Anaerobic nitrite reductase (162 aa).

Ser2 carries the N-acetylserine modification. Residues 9–158 (VFTEEQEALV…LVAAIKFEMK (150 aa)) enclose the Globin domain. Residues 42 to 46 (EIAPS) carry the Homodimerization motif. Heme b is bound by residues Ser52, Lys66, His70, Arg100, and His105. A Homodimerization motif is present at residues 112 to 124 (NEHFEVTRFALLE).

The protein belongs to the plant globin family. As to quaternary structure, homodimer with distinct heme coordination in each subunits. Requires heme b as cofactor. As to expression, root nodules.

The protein resides in the cytoplasm. It is found in the nucleus. It catalyses the reaction Fe(III)-heme b-[protein] + nitric oxide + H2O = Fe(II)-heme b-[protein] + nitrite + 2 H(+). Phytoglobin that reduces nitrite to nitric oxide (NO) under anoxic conditions (e.g. during flooding or in waterlogged soil) and upon root nodulation. Required for general plant development and during nodulation, especially for the onset of symbiosis. Monitors nitric oxide (NO) levels during early phase of the nitrogen-fixing symbiosis and buffers oxygen in functioning nodules. May not function as an oxygen storage or transport protein. Has an unusually high affinity for O(2) through a hexacoordinate heme iron because of a very low dissociation constant. The protein is Anaerobic nitrite reductase of Parasponia andersonii (Sponia andersonii).